The following is an 844-amino-acid chain: Translation initiation factor IF-2 (844 aa).

Over residues 1-11 (MTEDVKADVPK) the composition is skewed to basic and acidic residues. 2 disordered regions span residues 1-35 (MTEDVKADVPKKLSIQRRTKTTVSGTTTSGKSKAV) and 79-248 (RLEA…KGAA). The segment covering 21-33 (TTVSGTTTSGKSK) has biased composition (low complexity). The segment covering 79–161 (RLEAEKAATK…AAEEAKRYAE (83 aa)) has biased composition (basic and acidic residues). Residues 162–175 (ADDSDNESSSEDYS) show a composition bias toward acidic residues. Over residues 200–210 (RGKNKVAKAKK) the composition is skewed to basic residues. The segment covering 211 to 237 (GGRDDENSKNSKNERESNRKNQKDAKF) has biased composition (basic and acidic residues). The 171-residue stretch at 343–513 (TRAPVVTIMG…LLQSEVLELT (171 aa)) folds into the tr-type G domain. The interval 352 to 359 (GHVDHGKT) is G1. 352-359 (GHVDHGKT) serves as a coordination point for GTP. Residues 377 to 381 (GITQH) form a G2 region. The segment at 399-402 (DTPG) is G3. GTP contacts are provided by residues 399–403 (DTPGH) and 453–456 (NKID). The segment at 453 to 456 (NKID) is G4. Positions 489 to 491 (SAK) are G5.

It belongs to the TRAFAC class translation factor GTPase superfamily. Classic translation factor GTPase family. IF-2 subfamily.

It is found in the cytoplasm. Its function is as follows. One of the essential components for the initiation of protein synthesis. Protects formylmethionyl-tRNA from spontaneous hydrolysis and promotes its binding to the 30S ribosomal subunits. Also involved in the hydrolysis of GTP during the formation of the 70S ribosomal complex. This is Translation initiation factor IF-2 from Haemophilus influenzae (strain PittGG).